The primary structure comprises 361 residues: UDP-N-acetylglucosamine--N-acetylmuramyl-(pentapeptide) pyrophosphoryl-undecaprenol N-acetylglucosamine transferase (361 aa).

UDP-N-acetyl-alpha-D-glucosamine contacts are provided by residues 11–13 (TGG), N120, R161, S188, and Q282.

This sequence belongs to the glycosyltransferase 28 family. MurG subfamily.

It is found in the cell inner membrane. The enzyme catalyses di-trans,octa-cis-undecaprenyl diphospho-N-acetyl-alpha-D-muramoyl-L-alanyl-D-glutamyl-meso-2,6-diaminopimeloyl-D-alanyl-D-alanine + UDP-N-acetyl-alpha-D-glucosamine = di-trans,octa-cis-undecaprenyl diphospho-[N-acetyl-alpha-D-glucosaminyl-(1-&gt;4)]-N-acetyl-alpha-D-muramoyl-L-alanyl-D-glutamyl-meso-2,6-diaminopimeloyl-D-alanyl-D-alanine + UDP + H(+). Its pathway is cell wall biogenesis; peptidoglycan biosynthesis. Cell wall formation. Catalyzes the transfer of a GlcNAc subunit on undecaprenyl-pyrophosphoryl-MurNAc-pentapeptide (lipid intermediate I) to form undecaprenyl-pyrophosphoryl-MurNAc-(pentapeptide)GlcNAc (lipid intermediate II). The protein is UDP-N-acetylglucosamine--N-acetylmuramyl-(pentapeptide) pyrophosphoryl-undecaprenol N-acetylglucosamine transferase of Prochlorococcus marinus (strain MIT 9303).